Consider the following 314-residue polypeptide: MKVAVLGAAGGIGQALALLLKLQLPAGTNLALYDIAPVTPGVAVDVSHIPTAVKVVGYAGEDPTPALEGANLVLISAGVARKPGMDRSDLFNINAGIVRNLIEKVATVCPTACVGIITNPVNTTVAIAAEVLKKAGVYDKRKLFGVTSLDVLRSETFVAELKGKDVNDVKVPVIGGHSGVTILPLLSQAFEEDKIDFTAEEVAALTKRIQNAGTEVVEAKAGGGSATLSMAQAAARFARSVLKGLTGEQVVEYAYVEGNGEYARFFAQPVRLGLNGVEELLPIGTLSAYEEEAVQAMIPTLKADIELGEKFVNG.

NAD(+) is bound by residues 7 to 13 (GAAGGIG) and D34. Substrate is bound by residues R81 and R87. NAD(+) is bound by residues N94 and 117 to 119 (ITN). Substrate contacts are provided by N119 and R153. Catalysis depends on H177, which acts as the Proton acceptor. M230 is a binding site for NAD(+).

Belongs to the LDH/MDH superfamily. MDH type 1 family. In terms of assembly, homodimer.

The enzyme catalyses (S)-malate + NAD(+) = oxaloacetate + NADH + H(+). Functionally, catalyzes the reversible oxidation of malate to oxaloacetate. This is Malate dehydrogenase from Glaesserella parasuis serovar 5 (strain SH0165) (Haemophilus parasuis).